Here is a 503-residue protein sequence, read N- to C-terminus: Sugar phosphate exchanger 3 (503 aa).

Residues 20 to 40 (YTHHHLAAFLLTFFSYSLLHA) traverse the membrane as a helical segment. N-linked (GlcNAc...) asparagine glycosylation is found at Asn-62 and Asn-71. Helical transmembrane passes span 87 to 107 (TLFLGLLDTIFLFAYAVGLFI), 119 to 139 (LVLTFGMCSSAITMFVFGTLT), 152 to 172 (LVWIVNGLLQSTGWPCVVAIM), 183 to 203 (FVFGLWSACASVGNILGAFLA), and 214 to 234 (AFLVTASVQFAGGIIIFFGLV). Asn-275 is a glycosylation site (N-linked (GlcNAc...) asparagine). A run of 6 helical transmembrane segments spans residues 300–322 (GVLLYSLAYACLKLVNYSFFFWL), 342–362 (IWYDIGGIVGGTVQGLISDLM), 367–387 (PVLTVSLLLAVGALFGYSHSP), 395–415 (FIMSITGFFIGGPSNMISSAI), 437–457 (GIVDGTGSIGAAMGQFLVPLI), and 466–486 (VFYFFIFMICMTTVFMVPLIV).

The protein belongs to the major facilitator superfamily. Organophosphate:Pi antiporter (OPA) (TC 2.A.1.4) family.

The protein localises to the endoplasmic reticulum membrane. Its subcellular location is the lysosome membrane. Functionally, unlike the other SLC37 members, seems to lack glucose-6-phosphate antiporter activity. The protein is Sugar phosphate exchanger 3 (slc37a3) of Xenopus laevis (African clawed frog).